The primary structure comprises 89 residues: Long neurotoxin 1 (89 aa).

An N-terminal signal peptide occupies residues 1-21 (MKTLLLTLVVVTIVCLDLGDS). Cystine bridges form between cysteine 24/cysteine 41, cysteine 34/cysteine 58, cysteine 62/cysteine 74, and cysteine 75/cysteine 80.

The protein belongs to the three-finger toxin family. Long-chain subfamily. Type II alpha-neurotoxin sub-subfamily. As to expression, expressed by the venom gland.

The protein localises to the secreted. Binds with high affinity to muscular (alpha-1/CHRNA1) and neuronal (alpha-7/CHRNA7) nicotinic acetylcholine receptor (nAChR) and inhibits acetylcholine from binding to the receptor, thereby impairing neuromuscular and neuronal transmission. In Pseudonaja textilis (Eastern brown snake), this protein is Long neurotoxin 1.